A 357-amino-acid chain; its full sequence is UDP-N-acetylglucosamine--N-acetylmuramyl-(pentapeptide) pyrophosphoryl-undecaprenol N-acetylglucosamine transferase (357 aa).

UDP-N-acetyl-alpha-D-glucosamine-binding positions include 12-14, Asn-124, Arg-163, Ser-189, Ile-243, 262-267, and Gln-288; these read TGG and ALTVSE.

The protein belongs to the glycosyltransferase 28 family. MurG subfamily.

It is found in the cell inner membrane. The catalysed reaction is di-trans,octa-cis-undecaprenyl diphospho-N-acetyl-alpha-D-muramoyl-L-alanyl-D-glutamyl-meso-2,6-diaminopimeloyl-D-alanyl-D-alanine + UDP-N-acetyl-alpha-D-glucosamine = di-trans,octa-cis-undecaprenyl diphospho-[N-acetyl-alpha-D-glucosaminyl-(1-&gt;4)]-N-acetyl-alpha-D-muramoyl-L-alanyl-D-glutamyl-meso-2,6-diaminopimeloyl-D-alanyl-D-alanine + UDP + H(+). It participates in cell wall biogenesis; peptidoglycan biosynthesis. Cell wall formation. Catalyzes the transfer of a GlcNAc subunit on undecaprenyl-pyrophosphoryl-MurNAc-pentapeptide (lipid intermediate I) to form undecaprenyl-pyrophosphoryl-MurNAc-(pentapeptide)GlcNAc (lipid intermediate II). In Pseudomonas aeruginosa (strain LESB58), this protein is UDP-N-acetylglucosamine--N-acetylmuramyl-(pentapeptide) pyrophosphoryl-undecaprenol N-acetylglucosamine transferase.